Here is a 360-residue protein sequence, read N- to C-terminus: Photosystem II protein D1 (360 aa).

Transmembrane regions (helical) follow at residues 29 to 46 (YIGW…AATA), 118 to 133 (HFLL…QWEL), and 142 to 156 (WICV…SATA). Histidine 118 is a chlorophyll a binding site. Residue tyrosine 126 participates in pheophytin a binding. 2 residues coordinate [CaMn4O5] cluster: aspartate 170 and glutamate 189. The chain crosses the membrane as a helical span at residues 197–218 (FHMLGVAGVFGGSLFSAMHGSL). Residue histidine 198 coordinates chlorophyll a. Residues histidine 215 and 264 to 265 (SF) each bind a quinone. Histidine 215 lines the Fe cation pocket. Histidine 272 contributes to the Fe cation binding site. A helical membrane pass occupies residues 274–288 (FLAAWPVVGIWFTAL). Positions 332, 333, 342, and 344 each coordinate [CaMn4O5] cluster. A propeptide spanning residues 345–360 (AGEVAPVALTAPAING) is cleaved from the precursor.

It belongs to the reaction center PufL/M/PsbA/D family. In terms of assembly, PSII is composed of 1 copy each of membrane proteins PsbA, PsbB, PsbC, PsbD, PsbE, PsbF, PsbH, PsbI, PsbJ, PsbK, PsbL, PsbM, PsbT, PsbX, PsbY, PsbZ, Psb30/Ycf12, peripheral proteins PsbO, CyanoQ (PsbQ), PsbU, PsbV and a large number of cofactors. It forms dimeric complexes. It depends on The D1/D2 heterodimer binds P680, chlorophylls that are the primary electron donor of PSII, and subsequent electron acceptors. It shares a non-heme iron and each subunit binds pheophytin, quinone, additional chlorophylls, carotenoids and lipids. D1 provides most of the ligands for the Mn4-Ca-O5 cluster of the oxygen-evolving complex (OEC). There is also a Cl(-1) ion associated with D1 and D2, which is required for oxygen evolution. The PSII complex binds additional chlorophylls, carotenoids and specific lipids. as a cofactor. Post-translationally, tyr-161 forms a radical intermediate that is referred to as redox-active TyrZ, YZ or Y-Z. C-terminally processed by CtpA; processing is essential to allow assembly of the oxygen-evolving complex and thus photosynthetic growth.

The protein resides in the cellular thylakoid membrane. The catalysed reaction is 2 a plastoquinone + 4 hnu + 2 H2O = 2 a plastoquinol + O2. Functionally, photosystem II (PSII) is a light-driven water:plastoquinone oxidoreductase that uses light energy to abstract electrons from H(2)O, generating O(2) and a proton gradient subsequently used for ATP formation. It consists of a core antenna complex that captures photons, and an electron transfer chain that converts photonic excitation into a charge separation. The D1/D2 (PsbA/PsbD) reaction center heterodimer binds P680, the primary electron donor of PSII as well as several subsequent electron acceptors. The protein is Photosystem II protein D1 of Microchaete diplosiphon (Fremyella diplosiphon).